Consider the following 421-residue polypeptide: Gamma-glutamyl phosphate reductase (421 aa).

This sequence belongs to the gamma-glutamyl phosphate reductase family.

Its subcellular location is the cytoplasm. The enzyme catalyses L-glutamate 5-semialdehyde + phosphate + NADP(+) = L-glutamyl 5-phosphate + NADPH + H(+). Its pathway is amino-acid biosynthesis; L-proline biosynthesis; L-glutamate 5-semialdehyde from L-glutamate: step 2/2. Functionally, catalyzes the NADPH-dependent reduction of L-glutamate 5-phosphate into L-glutamate 5-semialdehyde and phosphate. The product spontaneously undergoes cyclization to form 1-pyrroline-5-carboxylate. The sequence is that of Gamma-glutamyl phosphate reductase from Pseudomonas paraeruginosa (strain DSM 24068 / PA7) (Pseudomonas aeruginosa (strain PA7)).